The primary structure comprises 503 residues: Glucosaminyl-phosphatidylinositol-acyltransferase PIGW (503 aa).

Residues 1–21 lie on the Lumenal side of the membrane; that stretch reads MSQKQLKEAFVRNLSGTSVLE. An N-linked (GlcNAc...) asparagine glycan is attached at Asn-13. Residues 22–42 traverse the membrane as a helical segment; it reads VTQGLCFPAFCILCRGLWIIF. Residues 43 to 48 lie on the Cytoplasmic side of the membrane; it reads SQHVCS. Residues 49-71 form a helical membrane-spanning segment; sequence FSNTWSTRFLMDFVVLIVPLVIT. Residues 72-74 are Lumenal-facing; the sequence is LTV. Residues 75 to 97 traverse the membrane as a helical segment; sequence LSSFILLENLTVIVWGAWLLYQI. The Cytoplasmic portion of the chain corresponds to 98–131; that stretch reads YHRRTCYAKVPVQKVFANFLKISLESEYNPAITC. A helical transmembrane segment spans residues 132 to 152; that stretch reads YRVINSVFTAIAILAVDFPLF. The Lumenal portion of the chain corresponds to 153-160; that stretch reads PRRFAKTE. A helical transmembrane segment spans residues 161–181; the sequence is LYGTGAMDFGVGGFIFGAAMV. The Cytoplasmic portion of the chain corresponds to 182–201; that stretch reads CPEVRRKSIEESRFNYLRKS. A helical transmembrane segment spans residues 202 to 222; that stretch reads LYSVWPLVFLGMGRLVIIKSI. Residues 223 to 236 are Lumenal-facing; it reads GYQEHSTEYGIHWN. A helical transmembrane segment spans residues 237–257; it reads FFFTIIVVRLVTSLLLIIFPL. The Cytoplasmic portion of the chain corresponds to 258-259; sequence NK. Residues 260 to 280 traverse the membrane as a helical segment; it reads SWIVAVSITVVYQLALDYTPL. Over 281–304 the chain is Lumenal; the sequence is KRILLYGTDGSGTRVGFLNANREG. Residues 305–325 traverse the membrane as a helical segment; the sequence is IISTLGYVTIHMAGVQTGLYV. Over 326–339 the chain is Cytoplasmic; sequence LKGRAQVRDWIKAT. Residues 340-360 traverse the membrane as a helical segment; that stretch reads CWVFSVAVGFFISLHIVQVNI. The Lumenal portion of the chain corresponds to 361 to 380; it reads EAVSRRMANLAFCLWVVASS. Residues 381-401 traverse the membrane as a helical segment; the sequence is LMLLSCLLLSGIILSFAQFLI. Topologically, residues 402–447 are cytoplasmic; that stretch reads KGSLVPCSWKLIQSPTTHKNHSESLILEAEKNQPSLCLITALNRNQ. Residue Ser-415 is modified to Phosphoserine. Residues 448-468 form a helical membrane-spanning segment; that stretch reads LFFFLLSNITTGLINLTMDTL. Residues 469-472 lie on the Lumenal side of the membrane; that stretch reads HTGA. The chain crosses the membrane as a helical span at residues 473–493; it reads LWTLVVLSIYMFTNCLVIYVL. Residues 494–503 lie on the Cytoplasmic side of the membrane; it reads DLQGKTIKFW.

This sequence belongs to the PIGW family.

It localises to the endoplasmic reticulum membrane. It functions in the pathway glycolipid biosynthesis; glycosylphosphatidylinositol-anchor biosynthesis. Functionally, acyltransferase that catalyzes the acyl transfer from an acyl-CoA at the 2-OH position of the inositol ring of glucosaminyl phosphatidylinositol (GlcN-PI) to generate GlcN-(acyl)PI and participates in the fourth step of GPI-anchor biosynthesi. Required for the transport of GPI-anchored proteins to the plasma membrane. Acetylation during GPI-anchor biosynthesis is not essential for the subsequent mannosylation and is usually removed soon after the attachment of GPIs to proteins. This is Glucosaminyl-phosphatidylinositol-acyltransferase PIGW from Mus musculus (Mouse).